The chain runs to 159 residues: Cystatin-9 (159 aa).

Residues 1–28 (MSSPQRRKAMPWALSLLLMGFQLLVTYA) form the signal peptide.

It belongs to the cystatin family. In terms of tissue distribution, expressed in heart, placenta, lung, liver, skeletal muscle and pancreas. Not expressed in brain. Expressed in epididymis, kidney, testis, spinal cord, and thymus with a strong expression in epididymis and kidney and a weak expression in the spinal cord and thymus.

The protein resides in the secreted. Functionally, may be involved in testis development. May play a role in hematopoietic differentiation or inflammation. Has immunomodulatory and antimicrobial functions against Francisella tularensis, a Gram-negative bacteria. The sequence is that of Cystatin-9 (CST9) from Homo sapiens (Human).